The following is a 434-amino-acid chain: MTRNLEKKMSIREDAQQGKVTPLFEQCAAVESMSVERLMAGVSDGTIAITKNKNHAFSKVIAIGAGTSTKVNANLGSSKDINSLEEELKKLAVAIKAGADTIMDLSMGGDLQKIRQEILKNCSVPLGTVPIYQVAAEVVAAGKEIVDMTVERMFEVIEQQAKDGVDFMTIHCGINRHLQERLKNQPRTMGVVSRGGSFTLDWMNHHKRENPMYEYFDDLLAILKEHEVTLSLGDGIRPGCLADATDRNQIQELITLGELTERAWAAGVQVIVEGPGHMPLNQIKANVLLQKQMCKGAPFYVLGPLVTDIAPGYDHITGAIGGAIAASAGADYLCYVTPAEHLKLPNCSDVHEGVIASKIAAHAADIVKGLPGAIEKDNAMAKCRKELDWKGQIELSIDPAKSAQYRHEGGGDATDACSMCGEFCALKVFERSQK.

Residues Asn-74, Met-103, Tyr-132, His-171, Ser-193 to Gly-195, Asp-234 to Arg-237, and Glu-273 contribute to the substrate site. A Zn(2+)-binding site is contributed by His-277. Position 300 (Tyr-300) interacts with substrate. Residue His-341 coordinates Zn(2+). Cys-417, Cys-420, and Cys-424 together coordinate [4Fe-4S] cluster.

It belongs to the ThiC family. In terms of assembly, homodimer. The cofactor is [4Fe-4S] cluster.

It carries out the reaction 5-amino-1-(5-phospho-beta-D-ribosyl)imidazole + S-adenosyl-L-methionine = 4-amino-2-methyl-5-(phosphooxymethyl)pyrimidine + CO + 5'-deoxyadenosine + formate + L-methionine + 3 H(+). Its pathway is cofactor biosynthesis; thiamine diphosphate biosynthesis. Catalyzes the synthesis of the hydroxymethylpyrimidine phosphate (HMP-P) moiety of thiamine from aminoimidazole ribotide (AIR) in a radical S-adenosyl-L-methionine (SAM)-dependent reaction. The protein is Phosphomethylpyrimidine synthase of Desulfotalea psychrophila (strain LSv54 / DSM 12343).